The chain runs to 71 residues: uncharacterized protein (71 aa).

Residues 37-57 (IGVGVSDGVSAGVGVGVAMII) form a helical membrane-spanning segment.

The protein resides in the membrane. This is an uncharacterized protein from Dictyostelium discoideum (Social amoeba).